Here is a 351-residue protein sequence, read N- to C-terminus: Xaa-Pro dipeptidase (351 aa).

Residues aspartate 212, aspartate 223, histidine 287, glutamate 316, and glutamate 330 each contribute to the Co(2+) site.

Belongs to the peptidase M24B family. Archaeal-type prolidase subfamily. In terms of assembly, homodimer. Co(2+) is required as a cofactor.

The protein resides in the cytoplasm. It carries out the reaction Xaa-L-Pro dipeptide + H2O = an L-alpha-amino acid + L-proline. In terms of biological role, splits dipeptides with a prolyl in the C-terminal position and a nonpolar amino acid at the N-terminal position. In Pyrococcus horikoshii (strain ATCC 700860 / DSM 12428 / JCM 9974 / NBRC 100139 / OT-3), this protein is Xaa-Pro dipeptidase (pepQ).